Consider the following 236-residue polypeptide: Leucyl/phenylalanyl-tRNA--protein transferase (236 aa).

The segment covering 1 to 13 (MNSLSYLNQDQQS) has biased composition (polar residues). Residues 1-22 (MNSLSYLNQDQQSFPPPEQALS) are disordered.

This sequence belongs to the L/F-transferase family.

The protein localises to the cytoplasm. The catalysed reaction is N-terminal L-lysyl-[protein] + L-leucyl-tRNA(Leu) = N-terminal L-leucyl-L-lysyl-[protein] + tRNA(Leu) + H(+). It carries out the reaction N-terminal L-arginyl-[protein] + L-leucyl-tRNA(Leu) = N-terminal L-leucyl-L-arginyl-[protein] + tRNA(Leu) + H(+). The enzyme catalyses L-phenylalanyl-tRNA(Phe) + an N-terminal L-alpha-aminoacyl-[protein] = an N-terminal L-phenylalanyl-L-alpha-aminoacyl-[protein] + tRNA(Phe). Its function is as follows. Functions in the N-end rule pathway of protein degradation where it conjugates Leu, Phe and, less efficiently, Met from aminoacyl-tRNAs to the N-termini of proteins containing an N-terminal arginine or lysine. The chain is Leucyl/phenylalanyl-tRNA--protein transferase from Shewanella piezotolerans (strain WP3 / JCM 13877).